Here is a 500-residue protein sequence, read N- to C-terminus: Maturase K (500 aa).

It belongs to the intron maturase 2 family. MatK subfamily.

The protein localises to the plastid. It is found in the chloroplast. Functionally, usually encoded in the trnK tRNA gene intron. Probably assists in splicing its own and other chloroplast group II introns. In Helianthus annuus (Common sunflower), this protein is Maturase K.